The chain runs to 89 residues: Small ribosomal subunit protein uS15 (89 aa).

The protein belongs to the universal ribosomal protein uS15 family. Part of the 30S ribosomal subunit. Forms a bridge to the 50S subunit in the 70S ribosome, contacting the 23S rRNA.

In terms of biological role, one of the primary rRNA binding proteins, it binds directly to 16S rRNA where it helps nucleate assembly of the platform of the 30S subunit by binding and bridging several RNA helices of the 16S rRNA. Its function is as follows. Forms an intersubunit bridge (bridge B4) with the 23S rRNA of the 50S subunit in the ribosome. This chain is Small ribosomal subunit protein uS15, found in Burkholderia ambifaria (strain MC40-6).